Here is a 166-residue protein sequence, read N- to C-terminus: Peptidoglycan-associated lipoprotein (166 aa).

A signal peptide spans 1 to 21 (MEMLKFGKFAALALAMAVAVG). Cys-22 carries the N-palmitoyl cysteine lipid modification. A lipid anchor (S-diacylglycerol cysteine) is attached at Cys-22. Positions 54–166 (SEEAALRAIT…AQNRRVELRK (113 aa)) constitute an OmpA-like domain. Residues 147-166 (VATGNDEQSWAQNRRVELRK) form a disordered region.

This sequence belongs to the Pal lipoprotein family. The Tol-Pal system is composed of five core proteins: the inner membrane proteins TolA, TolQ and TolR, the periplasmic protein TolB and the outer membrane protein Pal. They form a network linking the inner and outer membranes and the peptidoglycan layer.

Its subcellular location is the cell outer membrane. Part of the Tol-Pal system, which plays a role in outer membrane invagination during cell division and is important for maintaining outer membrane integrity. The polypeptide is Peptidoglycan-associated lipoprotein (Pseudomonas putida (Arthrobacter siderocapsulatus)).